The chain runs to 457 residues: Glutamate--tRNA ligase 2 (457 aa).

The 'HIGH' region signature appears at 9–19 (PSPTGYIHIGN). The 'KMSKS' region signature appears at 250 to 254 (GLSKR). Lysine 253 is a binding site for ATP.

It belongs to the class-I aminoacyl-tRNA synthetase family. Glutamate--tRNA ligase type 1 subfamily. Monomer.

The protein resides in the cytoplasm. The catalysed reaction is tRNA(Glu) + L-glutamate + ATP = L-glutamyl-tRNA(Glu) + AMP + diphosphate. Catalyzes the attachment of glutamate to tRNA(Glu) in a two-step reaction: glutamate is first activated by ATP to form Glu-AMP and then transferred to the acceptor end of tRNA(Glu). This is Glutamate--tRNA ligase 2 from Brucella melitensis biotype 1 (strain ATCC 23456 / CCUG 17765 / NCTC 10094 / 16M).